An 875-amino-acid chain; its full sequence is uncharacterized protein (875 aa).

This is an uncharacterized protein from Mycobacterium bovis (strain ATCC BAA-935 / AF2122/97).